We begin with the raw amino-acid sequence, 283 residues long: Bifunctional protein FolD 1 (283 aa).

Residues 166–168 (GRS) and I232 each bind NADP(+).

It belongs to the tetrahydrofolate dehydrogenase/cyclohydrolase family. Homodimer.

It carries out the reaction (6R)-5,10-methylene-5,6,7,8-tetrahydrofolate + NADP(+) = (6R)-5,10-methenyltetrahydrofolate + NADPH. It catalyses the reaction (6R)-5,10-methenyltetrahydrofolate + H2O = (6R)-10-formyltetrahydrofolate + H(+). It participates in one-carbon metabolism; tetrahydrofolate interconversion. Its function is as follows. Catalyzes the oxidation of 5,10-methylenetetrahydrofolate to 5,10-methenyltetrahydrofolate and then the hydrolysis of 5,10-methenyltetrahydrofolate to 10-formyltetrahydrofolate. This Lactobacillus johnsonii (strain CNCM I-12250 / La1 / NCC 533) protein is Bifunctional protein FolD 1.